The sequence spans 329 residues: UPF0725 protein EMB2204 (329 aa).

This sequence belongs to the UPF0725 (EMB2204) family.

Functionally, may be involved in embryogenesis. This chain is UPF0725 protein EMB2204 (EMB2204), found in Arabidopsis thaliana (Mouse-ear cress).